An 81-amino-acid polypeptide reads, in one-letter code: Arminin 2a (81 aa).

The N-terminal stretch at 1–18 (MKTVFAILFLAFIALTYA) is a signal peptide. A propeptide spanning residues 19 to 57 (RSYEDVKEEIKNEVVKEILEDLEEESDELDDKSKEINDA) is cleaved from the precursor. The residue at position 78 (Ala78) is an Alanine amide.

It belongs to the arminin family. Expressed in entodermal epithelium along the body column.

Its subcellular location is the secreted. The protein localises to the target cell membrane. Its function is as follows. Antimicrobial peptide with a broad-spectrum antimicrobial activity. Keeps its antibacterial activity under a wide range of salt concentrations that mimic physiological conditions of human blood, which is surprising, since Hydra is an obligate freshwater animal with nearly no salt tolerance. Does not affect red blood cells. This Hydra vulgaris (Hydra) protein is Arminin 2a.